The chain runs to 160 residues: UPF0262 protein BSUIS_A0274 (160 aa).

It belongs to the UPF0262 family.

The protein is UPF0262 protein BSUIS_A0274 of Brucella suis (strain ATCC 23445 / NCTC 10510).